We begin with the raw amino-acid sequence, 142 residues long: Large ribosomal subunit protein uL13 (142 aa).

The protein belongs to the universal ribosomal protein uL13 family. In terms of assembly, part of the 50S ribosomal subunit.

This protein is one of the early assembly proteins of the 50S ribosomal subunit, although it is not seen to bind rRNA by itself. It is important during the early stages of 50S assembly. This chain is Large ribosomal subunit protein uL13, found in Syntrophotalea carbinolica (strain DSM 2380 / NBRC 103641 / GraBd1) (Pelobacter carbinolicus).